We begin with the raw amino-acid sequence, 185 residues long: Ribosome-recycling factor (185 aa).

The protein belongs to the RRF family.

It is found in the cytoplasm. Functionally, responsible for the release of ribosomes from messenger RNA at the termination of protein biosynthesis. May increase the efficiency of translation by recycling ribosomes from one round of translation to another. The sequence is that of Ribosome-recycling factor from Campylobacter fetus subsp. fetus (strain 82-40).